The following is a 326-amino-acid chain: HTH-type transcriptional regulator SyrM (326 aa).

Residues 32-89 form the HTH lysR-type domain; that stretch reads IDLNLLVDLEALLQYRHITQAAQHVGRSQPAMSRALSRLRGMLKDDLLVAGSRGLVLT. Positions 49 to 68 form a DNA-binding region, H-T-H motif; the sequence is ITQAAQHVGRSQPAMSRALS.

Belongs to the LysR transcriptional regulatory family.

In terms of biological role, acts in trans to stimulate nod gene expression via nodD3 and exo gene expression via SyrA. The chain is HTH-type transcriptional regulator SyrM (syrM) from Rhizobium meliloti (strain 1021) (Ensifer meliloti).